The chain runs to 323 residues: Mortality factor 4-like protein 1 (323 aa).

One can recognise a Tudor-knot domain in the interval 12–62; that stretch reads QEGERVLCFHGPLLYEAKCVKVAIKDKQVKYFIHHSGWNKNWDEWVPESRV. The interval 76–143 is disordered; it reads LQKANQEQYA…RKKRARVDPT (68 aa). The tract at residues 94-227 is sufficient for interaction with SIN3A; it reads PGKKTSGLQQ…VAGIKEYFNV (134 aa). The short motif at 96–107 is the Nuclear localization signal element; it reads KKTSGLQQKNVD. Position 104 is an N6-acetyllysine (K104). The segment at 125–191 is interaction with RB1-1; the sequence is STSETPQPPR…FYLPAKKNVD (67 aa). Positions 149 to 303 are sufficient for interaction with PHF12; sequence TFMNRVEVKV…FLKYLAKNSA (155 aa). Residues 152-323 form the MRG domain; sequence NRVEVKVKIP…APPEYHRKAV (172 aa). An interaction with RB1-2 region spans residues 284–305; that stretch reads LALLLNYLHDFLKYLAKNSATL.

In terms of assembly, component of the NuA4 histone acetyltransferase complex which contains the catalytic subunit KAT5/TIP60 and the subunits EP400, TRRAP/PAF400, BRD8/SMAP, EPC1, DMAP1/DNMAP1, RUVBL1/TIP49, RUVBL2, ING3, actin, ACTL6A/BAF53A, MORF4L1/MRG15, MORF4L2/MRGX, MRGBP, YEATS4/GAS41, VPS72/YL1 and MEAF6. The NuA4 complex interacts with MYC and the adenovirus E1A protein. MORF4L1 may also participate in the formation of NuA4 related complexes which lack the KAT5/TIP60 catalytic subunit, but which include the SWI/SNF related protein SRCAP. Component of the mSin3A histone deacetylase complex, which includes SIN3A, HDAC2, ARID4B, MORF4L1, RBBP4/RbAp48, and RBBP7/RbAp46. May also interact with PHF12 and one or more as yet undefined members of the TLE (transducin-like enhancer of split) family of transcriptional repressors. Component of the SIN3B complex, which includes SIN3B, HDAC2 or HDAC1, PHF12 and MORF4L1. Interacts with RB1 and KAT8. Interacts with the N-terminus of MRFAP1. Found in a complex composed of MORF4L1, MRFAP1 and RB1. Interacts with the entire BRCA complex, which contains BRCA1, PALB2, BRCA2 and RAD51. Interacts with PALB2. Forms a complex with MSL1 and NUPR1.

Its subcellular location is the nucleus. Functionally, component of the NuA4 histone acetyltransferase (HAT) complex which is involved in transcriptional activation of select genes principally by acetylation of nucleosomal histones H4 and H2A. This modification may both alter nucleosome - DNA interactions and promote interaction of the modified histones with other proteins which positively regulate transcription. This complex may be required for the activation of transcriptional programs associated with oncogene and proto-oncogene mediated growth induction, tumor suppressor mediated growth arrest and replicative senescence, apoptosis, and DNA repair. The NuA4 complex ATPase and helicase activities seem to be, at least in part, contributed by the association of RUVBL1 and RUVBL2 with EP400. NuA4 may also play a direct role in DNA repair when directly recruited to sites of DNA damage. As part of the SIN3B complex represses transcription and counteracts the histone acetyltransferase activity of EP300 through the recognition H3K27ac marks by PHF12 and the activity of the histone deacetylase HDAC2. SIN3B complex is recruited downstream of the constitutively active genes transcriptional start sites through interaction with histones and mitigates histone acetylation and RNA polymerase II progression within transcribed regions contributing to the regulation of transcription. Required for homologous recombination repair (HRR) and resistance to mitomycin C (MMC). Involved in the localization of PALB2, BRCA2 and RAD51, but not BRCA1, to DNA-damage foci. This Pongo abelii (Sumatran orangutan) protein is Mortality factor 4-like protein 1 (MORF4L1).